The chain runs to 292 residues: Acetylglutamate kinase (292 aa).

Residues 64 to 65, Arg86, and Asn190 contribute to the substrate site; that span reads GG.

This sequence belongs to the acetylglutamate kinase family. ArgB subfamily.

Its subcellular location is the cytoplasm. The catalysed reaction is N-acetyl-L-glutamate + ATP = N-acetyl-L-glutamyl 5-phosphate + ADP. It participates in amino-acid biosynthesis; L-arginine biosynthesis; N(2)-acetyl-L-ornithine from L-glutamate: step 2/4. Its function is as follows. Catalyzes the ATP-dependent phosphorylation of N-acetyl-L-glutamate. This is Acetylglutamate kinase from Pelobacter propionicus (strain DSM 2379 / NBRC 103807 / OttBd1).